The chain runs to 339 residues: tRNA N6-adenosine threonylcarbamoyltransferase (339 aa).

His115 and His119 together coordinate Fe cation. Substrate is bound by residues 136–140 (LISGG), Asp168, Glu185, and Ser265. Asp293 is a Fe cation binding site.

It belongs to the KAE1 / TsaD family. Fe(2+) serves as cofactor.

The protein localises to the cytoplasm. The enzyme catalyses L-threonylcarbamoyladenylate + adenosine(37) in tRNA = N(6)-L-threonylcarbamoyladenosine(37) in tRNA + AMP + H(+). Its function is as follows. Required for the formation of a threonylcarbamoyl group on adenosine at position 37 (t(6)A37) in tRNAs that read codons beginning with adenine. Is probably involved in the transfer of the threonylcarbamoyl moiety of threonylcarbamoyl-AMP (TC-AMP) to the N6 group of A37. This chain is tRNA N6-adenosine threonylcarbamoyltransferase, found in Pyrobaculum calidifontis (strain DSM 21063 / JCM 11548 / VA1).